A 237-amino-acid chain; its full sequence is Listeriolysin regulatory protein (237 aa).

The HTH crp-type domain maps to 137-212; that stretch reads NGKLGSICGQ…NSCFYVQNLD (76 aa).

Functionally, positively regulates expression of listeriolysin, of 1-phosphadidylinositol phosphodiesterase (PI-PLC) and other virulence factors. The sequence is that of Listeriolysin regulatory protein (prfA) from Listeria monocytogenes serovar 1/2a (strain ATCC BAA-679 / EGD-e).